A 178-amino-acid polypeptide reads, in one-letter code: ATP synthase subunit delta (178 aa).

It belongs to the ATPase delta chain family. As to quaternary structure, F-type ATPases have 2 components, F(1) - the catalytic core - and F(0) - the membrane proton channel. F(1) has five subunits: alpha(3), beta(3), gamma(1), delta(1), epsilon(1). F(0) has three main subunits: a(1), b(2) and c(10-14). The alpha and beta chains form an alternating ring which encloses part of the gamma chain. F(1) is attached to F(0) by a central stalk formed by the gamma and epsilon chains, while a peripheral stalk is formed by the delta and b chains.

It localises to the cell membrane. Functionally, f(1)F(0) ATP synthase produces ATP from ADP in the presence of a proton or sodium gradient. F-type ATPases consist of two structural domains, F(1) containing the extramembraneous catalytic core and F(0) containing the membrane proton channel, linked together by a central stalk and a peripheral stalk. During catalysis, ATP synthesis in the catalytic domain of F(1) is coupled via a rotary mechanism of the central stalk subunits to proton translocation. Its function is as follows. This protein is part of the stalk that links CF(0) to CF(1). It either transmits conformational changes from CF(0) to CF(1) or is implicated in proton conduction. The polypeptide is ATP synthase subunit delta (Streptococcus thermophilus (strain ATCC BAA-250 / LMG 18311)).